The primary structure comprises 145 residues: Putative antiporter subunit mnhG2 (145 aa).

3 consecutive transmembrane segments (helical) span residues isoleucine 11 to valine 31, valine 51 to valine 71, and arginine 72 to alanine 92.

This sequence belongs to the CPA3 antiporters (TC 2.A.63) subunit G family. As to quaternary structure, may form a heterooligomeric complex that consists of seven subunits: mnhA2, mnhB2, mnhC2, mnhD2, mnhE2, mnhF2 and mnhG2.

The protein resides in the cell membrane. In Staphylococcus aureus (strain bovine RF122 / ET3-1), this protein is Putative antiporter subunit mnhG2 (mnhG2).